A 220-amino-acid chain; its full sequence is Large ribosomal subunit protein uL3 (220 aa).

It belongs to the universal ribosomal protein uL3 family. In terms of assembly, part of the 50S ribosomal subunit. Forms a cluster with proteins L14 and L19.

Functionally, one of the primary rRNA binding proteins, it binds directly near the 3'-end of the 23S rRNA, where it nucleates assembly of the 50S subunit. This Staphylococcus haemolyticus (strain JCSC1435) protein is Large ribosomal subunit protein uL3.